Here is a 283-residue protein sequence, read N- to C-terminus: Rhomboid-like protease 2 (283 aa).

Positions 1–11 (MANIRTLSDYA) are enriched in polar residues. The segment at 1–26 (MANIRTLSDYASSPPRGSSALEGEVG) is disordered. The next 3 helical transmembrane spans lie at 62–82 (IIII…AGLA), 114–134 (ICPL…WVQI), and 149–169 (LLAV…AVLF). S178 (nucleophile) is an active-site residue. 4 helical membrane-spanning segments follow: residues 179–199 (TAVF…WHAI), 205–225 (AIIS…GSHM), 227–247 (SVGH…LNEN), and 260–280 (LTSQ…IFLV). The active site involves H230.

It belongs to the peptidase S54 family.

It localises to the membrane. The catalysed reaction is Cleaves type-1 transmembrane domains using a catalytic dyad composed of serine and histidine that are contributed by different transmembrane domains.. In terms of biological role, serine protease involved in intramembrane proteolysis and the subsequent release of polypeptides from their membrane anchors. This is Rhomboid-like protease 2 (ROM2) from Toxoplasma gondii.